The chain runs to 288 residues: Pantothenate synthetase (288 aa).

Residue methionine 30–histidine 37 participates in ATP binding. Histidine 37 (proton donor) is an active-site residue. Glutamine 61 provides a ligand contact to (R)-pantoate. Glutamine 61 contacts beta-alanine. Position 147 to 150 (glycine 147 to aspartate 150) interacts with ATP. Glutamine 153 provides a ligand contact to (R)-pantoate. Residues valine 176 and isoleucine 184–arginine 187 contribute to the ATP site.

Belongs to the pantothenate synthetase family. As to quaternary structure, homodimer.

Its subcellular location is the cytoplasm. The catalysed reaction is (R)-pantoate + beta-alanine + ATP = (R)-pantothenate + AMP + diphosphate + H(+). It functions in the pathway cofactor biosynthesis; (R)-pantothenate biosynthesis; (R)-pantothenate from (R)-pantoate and beta-alanine: step 1/1. Functionally, catalyzes the condensation of pantoate with beta-alanine in an ATP-dependent reaction via a pantoyl-adenylate intermediate. This chain is Pantothenate synthetase, found in Chlorobium phaeobacteroides (strain BS1).